The sequence spans 290 residues: Probable aquaporin PIP2-7 (290 aa).

Transmembrane regions (helical) follow at residues 45–65 and 79–99; these read ALIAEFMATLIFLYVSIATVI and GVGYLGVAWSFGATIFVLVYC. Positions 109–111 match the NPA 1 motif; the sequence is NPA. The next 3 membrane-spanning stretches (helical) occupy residues 128 to 148, 168 to 188, and 202 to 222; these read VLYVVAQCLGAIAGAGIVKGI, SAAGALGAEIVGTFILVYTVF, and IPVLVPLPIGFAVFVVHLATI. The short motif at 230–232 is the NPA 2 element; the sequence is NPA. Residues 252–272 form a helical membrane-spanning segment; it reads IFWVGPVIGAFLAAAYHKLVL.

This sequence belongs to the MIP/aquaporin (TC 1.A.8) family. PIP (TC 1.A.8.11) subfamily. In terms of tissue distribution, expressed in roots.

Its subcellular location is the cell membrane. Aquaporins facilitate the transport of water and small neutral solutes across cell membranes. The sequence is that of Probable aquaporin PIP2-7 (PIP2-7) from Oryza sativa subsp. japonica (Rice).